Consider the following 314-residue polypeptide: Epithelial cell adhesion molecule (314 aa).

The first 23 residues, 1–23 (MAPPQVLAFGLLLAAATATFAAA), serve as a signal peptide directing secretion. At 24-265 (QEECVCENYK…APEFSMQGLK (242 aa)) the chain is on the extracellular side. Intrachain disulfides connect cysteine 27-cysteine 46, cysteine 29-cysteine 59, cysteine 38-cysteine 48, cysteine 66-cysteine 99, cysteine 110-cysteine 116, and cysteine 118-cysteine 135. In terms of domain architecture, Thyroglobulin type-1 spans 63-135 (AAKCLVMKAE…RTDKDTEITC (73 aa)). A glycan (N-linked (GlcNAc...) asparagine; partial) is linked at asparagine 74. The N-linked (GlcNAc...) asparagine glycan is linked to asparagine 111. Residue asparagine 198 is glycosylated (N-linked (GlcNAc...) asparagine). The chain crosses the membrane as a helical span at residues 266 to 288 (AGVIAVIVVVVIAVVAGIVVLVI). Over 289 to 314 (SRKKRMAKYEKAEIKEMGEMHRELNA) the chain is Cytoplasmic.

Belongs to the EPCAM family. In terms of assembly, monomer. Interacts with phosphorylated CLDN7. Hyperglycosylated in carcinoma tissue as compared with autologous normal epithelia. Glycosylation at Asn-198 is crucial for protein stability. Highly and selectively expressed by undifferentiated rather than differentiated embryonic stem cells (ESC). Levels rapidly diminish as soon as ESC's differentiate (at protein levels). Expressed in almost all epithelial cell membranes but not on mesodermal or neural cell membranes. Found on the surface of adenocarcinoma.

It localises to the lateral cell membrane. It is found in the cell junction. The protein resides in the tight junction. In terms of biological role, may act as a physical homophilic interaction molecule between intestinal epithelial cells (IECs) and intraepithelial lymphocytes (IELs) at the mucosal epithelium for providing immunological barrier as a first line of defense against mucosal infection. Plays a role in embryonic stem cells proliferation and differentiation. Up-regulates the expression of FABP5, MYC and cyclins A and E. This chain is Epithelial cell adhesion molecule (EPCAM), found in Homo sapiens (Human).